A 354-amino-acid chain; its full sequence is Methylthioribose-1-phosphate isomerase (354 aa).

Residues 58–60 (RGA), arginine 101, and glutamine 204 each bind substrate. Aspartate 245 serves as the catalytic Proton donor. 255–256 (NK) contributes to the substrate binding site.

The protein belongs to the eIF-2B alpha/beta/delta subunits family. MtnA subfamily.

The catalysed reaction is 5-(methylsulfanyl)-alpha-D-ribose 1-phosphate = 5-(methylsulfanyl)-D-ribulose 1-phosphate. The protein operates within amino-acid biosynthesis; L-methionine biosynthesis via salvage pathway; L-methionine from S-methyl-5-thio-alpha-D-ribose 1-phosphate: step 1/6. Functionally, catalyzes the interconversion of methylthioribose-1-phosphate (MTR-1-P) into methylthioribulose-1-phosphate (MTRu-1-P). This is Methylthioribose-1-phosphate isomerase from Xylella fastidiosa (strain M23).